We begin with the raw amino-acid sequence, 471 residues long: MENFKHLPEPFRIRVIEPVKRTTRAYREEAIIKSGMNPFLLDSEDVFIDLLTDSGTGAVTQSMQAAMMRGDEAYSGSRSYYALAESVKNIFGYQYTIPTHQGRGAEQIYIPVLIKKREQEKGLDRSKMVAFSNYFFDTTQGHSQINGCTVRNVYIKEAFDTGVRYDFKGNFDLEGLERGIEEVGPNNVPYIVATITSNSAGGQPVSLANLKAMYSIAKKYDIPVVMDSARFAENAYFIKQREAEYKDWTIEQITRETYKYADMLAMSAKKDAMVPMGGLLCMKDDSFFDVYTECRTLCVVQEGFPTYGGLEGGAMERLAVGLYDGMNLDWLAYRIAQVQYLVDGLEEIGVVCQQAGGHAAFVDAGKLLPHIPADQFPAQALACELYKVAGIRAVEIGSFLLGRDPKTGKQLPCPAELLRLTIPRATYTQTHMDFIIEAFKHVKENASNIKGLTFTYEPKVLRHFTAKLKEV.

3 positions are modified to N6-acetyllysine: lysine 5, lysine 115, and lysine 156. Lysine 270 carries the post-translational modification N6-(pyridoxal phosphate)lysine. N6-acetyllysine is present on lysine 450.

Belongs to the beta-eliminating lyase family. Homotetramer. Requires pyridoxal 5'-phosphate as cofactor.

The enzyme catalyses L-tryptophan + H2O = indole + pyruvate + NH4(+). It participates in amino-acid degradation; L-tryptophan degradation via pyruvate pathway; indole and pyruvate from L-tryptophan: step 1/1. The polypeptide is Tryptophanase (tnaA) (Escherichia coli O157:H7).